Reading from the N-terminus, the 95-residue chain is Large ribosomal subunit protein uL23 (95 aa).

This sequence belongs to the universal ribosomal protein uL23 family. Part of the 50S ribosomal subunit. Contacts protein L29, and trigger factor when it is bound to the ribosome.

In terms of biological role, one of the early assembly proteins it binds 23S rRNA. One of the proteins that surrounds the polypeptide exit tunnel on the outside of the ribosome. Forms the main docking site for trigger factor binding to the ribosome. This chain is Large ribosomal subunit protein uL23, found in Deinococcus deserti (strain DSM 17065 / CIP 109153 / LMG 22923 / VCD115).